Consider the following 312-residue polypeptide: Aspartate carbamoyltransferase catalytic subunit (312 aa).

Residues R58 and T59 each coordinate carbamoyl phosphate. K86 provides a ligand contact to L-aspartate. 3 residues coordinate carbamoyl phosphate: R108, H136, and Q139. Residues R169 and R223 each coordinate L-aspartate. Carbamoyl phosphate contacts are provided by G264 and P265.

This sequence belongs to the aspartate/ornithine carbamoyltransferase superfamily. ATCase family. As to quaternary structure, heterododecamer (2C3:3R2) of six catalytic PyrB chains organized as two trimers (C3), and six regulatory PyrI chains organized as three dimers (R2).

It catalyses the reaction carbamoyl phosphate + L-aspartate = N-carbamoyl-L-aspartate + phosphate + H(+). The protein operates within pyrimidine metabolism; UMP biosynthesis via de novo pathway; (S)-dihydroorotate from bicarbonate: step 2/3. In terms of biological role, catalyzes the condensation of carbamoyl phosphate and aspartate to form carbamoyl aspartate and inorganic phosphate, the committed step in the de novo pyrimidine nucleotide biosynthesis pathway. This chain is Aspartate carbamoyltransferase catalytic subunit, found in Heliobacterium modesticaldum (strain ATCC 51547 / Ice1).